Reading from the N-terminus, the 515-residue chain is Maturase K (515 aa).

It belongs to the intron maturase 2 family. MatK subfamily.

Its subcellular location is the plastid. The protein localises to the chloroplast. Functionally, usually encoded in the trnK tRNA gene intron. Probably assists in splicing its own and other chloroplast group II introns. In Picea pungens (Colorado spruce), this protein is Maturase K.